The chain runs to 95 residues: Selenoprotein K (95 aa).

A helical membrane pass occupies residues 20-42 (LSFITDFFWGIAEFVVLFFRTLL). Residues 47 to 95 (KKRRGYGSSSDSRYDDGRGPPGNPPRRRMGRINHLQGPNPPPMAGGUGR) are disordered. Selenocysteine 93 is a non-standard amino acid (selenocysteine).

It belongs to the selenoprotein K family. Interacts with DERL1, DERL2, DERL3 and SELENOS. The SELENOK-SELENOS complex interacts with VCP. Interacts with ZDHHC6. Cleaved by CAPN2/m-calpain in resting macrophages but not in activated macrophages. Macrophage activation up-regulates expression of the calpain inhibitor CAST/calpastatin, resulting in inhibition of CAPN2 activity. Post-translationally, truncated SELENOK proteins produced by failed UGA/Sec decoding are ubiquitinated by the CRL2(KLHDC2) complex, which recognizes the diglycine (Gly-Gly) at the C-terminus of truncated SELENOK proteins.

Its subcellular location is the endoplasmic reticulum membrane. The protein resides in the cell membrane. In terms of biological role, required for Ca(2+) flux in immune cells and plays a role in T-cell proliferation and in T-cell and neutrophil migration. Involved in endoplasmic reticulum-associated degradation (ERAD) of soluble glycosylated proteins. Required for palmitoylation and cell surface expression of CD36 and involved in macrophage uptake of low-density lipoprotein and in foam cell formation. Together with ZDHHC6, required for palmitoylation of ITPR1 in immune cells, leading to regulate ITPR1 stability and function. Plays a role in protection of cells from ER stress-induced apoptosis. Protects cells from oxidative stress when overexpressed in cardiomyocytes. This Bos taurus (Bovine) protein is Selenoprotein K.